Consider the following 37-residue polypeptide: Esculentin-2B (37 aa).

An intrachain disulfide couples Cys-31 to Cys-37.

As to expression, expressed by the skin glands.

The protein localises to the secreted. In terms of biological role, antibacterial activity against Gram-positive bacterium S.aureus and Gram-negative bacterium E.coli. Has activity against C.albicans. The sequence is that of Esculentin-2B from Lithobates berlandieri (Rio Grande leopard frog).